The chain runs to 858 residues: MENTTPLRKQYLDIKKNYPEAIVFFRLGDFYETFEEDARIAARELEIVLTSREMGKGLKVPLAGIPYHALDNYLSRLINKGYKVAICEQVTKPGETKGLVQRQVTRLVTPGTVVEPNLLQTKQNNFLLSLYLTEDSCGLAFADISTSEFGCTQTNISELEAEISRLSPAEIILPKNQSLNLPIHLKATISKLDGYYFEADIARERLLRHFECQNLSAYGCENMPLAISAAGALLNYLEETQKSSLKQLERLSVYTTADYMQMDSHTLSNLEIFRSSGGNSLKGSLLGILDQTKTAMGGRLLRKFLGQPLLKQSDIEKRLSAVDYFFEESLARTSLAKSLGQIADMERMANRIRQKTILPRELISLKNSLETVSAIHRQFGLMPPPRLAYFLNGLKPLPEMLDIINKTITDDPPSTLGDGKVIRAGFDPEMDKLCSLAGDARTFLSQMETRERERTGIKSLKLGYNRVFGYYIEISNANLGDVPPEFIRKQTLVNAERFITPELKEYENLILNAKERLLEMETGLYEQVLNQLGGFYSALLANATALAALDVLSAFAEVAVRNSYVRPVFHPENRLDIRKGRHPMVEQGLGYGSFVANDISLSAEDCQIIILTGPNMAGKSTYLKQTALIVLMAQIGSYVPAETAELCLTDRIFTRIGAREDLSAGQSTFMVEMVETASILNTATSRSLLILDEIGRGTSTYDGLAIAQAVVEYIHSQPSLTAKTLFATHYHELVELASYLPRVKNYNIAVSEDRGEVVFLHKIVPGGVDKSYGIHVAKLAGLPKWVIKRAYEVLTELENPAKKQPKSRTCQSQLQLPMTGQTSVLEEEIKELEIESLTPLAALNKLYELKKKAEEQGL.

Position 613–620 (613–620) interacts with ATP; that stretch reads GPNMAGKS.

It belongs to the DNA mismatch repair MutS family.

This protein is involved in the repair of mismatches in DNA. It is possible that it carries out the mismatch recognition step. This protein has a weak ATPase activity. The polypeptide is DNA mismatch repair protein MutS (Dehalococcoides mccartyi (strain CBDB1)).